Consider the following 343-residue polypeptide: N-acetyl-gamma-glutamyl-phosphate reductase (343 aa).

Cys-149 is an active-site residue.

The protein belongs to the NAGSA dehydrogenase family. Type 1 subfamily.

Its subcellular location is the cytoplasm. The enzyme catalyses N-acetyl-L-glutamate 5-semialdehyde + phosphate + NADP(+) = N-acetyl-L-glutamyl 5-phosphate + NADPH + H(+). It participates in amino-acid biosynthesis; L-arginine biosynthesis; N(2)-acetyl-L-ornithine from L-glutamate: step 3/4. In terms of biological role, catalyzes the NADPH-dependent reduction of N-acetyl-5-glutamyl phosphate to yield N-acetyl-L-glutamate 5-semialdehyde. This chain is N-acetyl-gamma-glutamyl-phosphate reductase, found in Alkalilimnicola ehrlichii (strain ATCC BAA-1101 / DSM 17681 / MLHE-1).